The following is a 7705-amino-acid chain: Copine family protein 2 (7705 aa).

9 disordered regions span residues Met-1 to Glu-61, Lys-269 to Gln-360, Ser-372 to Pro-408, Gly-464 to Val-492, Ser-506 to Gly-538, Asp-560 to Pro-614, Asn-1301 to Val-1358, Glu-4381 to Ser-4427, and Arg-6779 to Thr-6800. Over residues Ser-12 to Ser-25 the composition is skewed to low complexity. Positions Lys-269–Thr-282 are enriched in basic and acidic residues. Over residues Ser-302–Ser-313 the composition is skewed to low complexity. Over residues Ile-318–Asp-336 the composition is skewed to basic residues. Residues Ser-372–Arg-404 show a composition bias toward basic and acidic residues. Polar residues predominate over residues Ala-522–Pro-532. A compositionally biased stretch (basic and acidic residues) spans Asp-560–Ile-587. The span at Gln-588 to Thr-597 shows a compositional bias: polar residues. 2 stretches are compositionally biased toward basic and acidic residues: residues Asn-598 to Gln-611 and Asn-1301 to Glu-1335. Residues Arg-4397–Arg-4409 show a composition bias toward low complexity. Basic and acidic residues-rich tracts occupy residues Pro-4411–Ser-4427 and Arg-6779–Gly-6797. A VWFA domain is found at Asn-7475–Asn-7673.

The protein belongs to the copine family. Expressed in body wall muscle.

The sequence is that of Copine family protein 2 (cpna-2) from Caenorhabditis elegans.